The primary structure comprises 444 residues: Argininosuccinate synthase (444 aa).

ATP contacts are provided by residues 18–26 (AFSGGLDTS) and A44. Y100 is an L-citrulline binding site. ATP-binding residues include G130 and T132. L-aspartate is bound by residues T132, N136, and D137. N136 contacts L-citrulline. D137 is a binding site for ATP. L-citrulline contacts are provided by R140 and S193. D195 contributes to the ATP binding site. L-citrulline-binding residues include T202, E204, and E281.

It belongs to the argininosuccinate synthase family. Type 2 subfamily. As to quaternary structure, homotetramer.

The protein localises to the cytoplasm. The enzyme catalyses L-citrulline + L-aspartate + ATP = 2-(N(omega)-L-arginino)succinate + AMP + diphosphate + H(+). The protein operates within amino-acid biosynthesis; L-arginine biosynthesis; L-arginine from L-ornithine and carbamoyl phosphate: step 2/3. This Mannheimia succiniciproducens (strain KCTC 0769BP / MBEL55E) protein is Argininosuccinate synthase.